The primary structure comprises 75 residues: Sec-independent protein translocase protein TatA (75 aa).

Residues M1–G21 form a helical membrane-spanning segment. A disordered region spans residues K41–R75.

It belongs to the TatA/E family. As to quaternary structure, the Tat system comprises two distinct complexes: a TatABC complex, containing multiple copies of TatA, TatB and TatC subunits, and a separate TatA complex, containing only TatA subunits. Substrates initially bind to the TatABC complex, which probably triggers association of the separate TatA complex to form the active translocon.

The protein resides in the cell inner membrane. Part of the twin-arginine translocation (Tat) system that transports large folded proteins containing a characteristic twin-arginine motif in their signal peptide across membranes. TatA could form the protein-conducting channel of the Tat system. This Xanthomonas axonopodis pv. citri (strain 306) protein is Sec-independent protein translocase protein TatA.